A 449-amino-acid polypeptide reads, in one-letter code: GTPase Der (449 aa).

2 consecutive EngA-type G domains span residues 4-174 (PIVA…PPKT) and 183-358 (LRVA…AQRQ). Residues 10–17 (GRPNVGKS), 57–61 (DTAGL), 126–129 (NKCD), 189–196 (GRPNVGKS), 236–240 (DTAGI), and 301–304 (NKWD) contribute to the GTP site. One can recognise a KH-like domain in the interval 359–444 (KRIPTSELNN…PIVIVFRSRE (86 aa)).

It belongs to the TRAFAC class TrmE-Era-EngA-EngB-Septin-like GTPase superfamily. EngA (Der) GTPase family. As to quaternary structure, associates with the 50S ribosomal subunit.

In terms of biological role, GTPase that plays an essential role in the late steps of ribosome biogenesis. The sequence is that of GTPase Der from Chloroflexus aggregans (strain MD-66 / DSM 9485).